The chain runs to 158 residues: Transcription elongation factor GreA (158 aa).

A coiled-coil region spans residues 3-75 (TEKTYPMTQE…TQLENMIRNA (73 aa)).

The protein belongs to the GreA/GreB family.

Its function is as follows. Necessary for efficient RNA polymerase transcription elongation past template-encoded arresting sites. The arresting sites in DNA have the property of trapping a certain fraction of elongating RNA polymerases that pass through, resulting in locked ternary complexes. Cleavage of the nascent transcript by cleavage factors such as GreA or GreB allows the resumption of elongation from the new 3'terminus. GreA releases sequences of 2 to 3 nucleotides. This chain is Transcription elongation factor GreA, found in Bacillus cereus (strain ATCC 14579 / DSM 31 / CCUG 7414 / JCM 2152 / NBRC 15305 / NCIMB 9373 / NCTC 2599 / NRRL B-3711).